A 383-amino-acid polypeptide reads, in one-letter code: MEKKTGLIQFLSEWKCVDDQPDHNRRLHYSRFALSPLLVDQAMTIGVAIRRALLSEVEGISIISANIVGAVHEYSTLDGVRESVDEILLNLKQIVIKGAKGASITPLDHKEYRASIFAQGPGVVTAEHIKFPSSILAVDPDQSIATLLNETQLCIELFIRQGIAKQLTRTKKNHQGFFIDANFTPVQKANFSIHSVGDPKGLQQLLLLEIWTNKTLTPAEALYQAHASLLNLFHQISPPLLHKELSPSKNILNQNSDSNSLGGSSFGRVVSLETRRDSTQTNNSSIPKEIQPSVRLKSYTDTNLSIDKQMNDSVNKENLSIDELELSPRISNCLKKANINTIADLLNYTQEDLLKIKNFGRKSVEQVSLVLRKRFNMELLPTK.

The interval 1 to 240 (MEKKTGLIQF…NLFHQISPPL (240 aa)) is alpha N-terminal domain (alpha-NTD). Residues 306-383 (IDKQMNDSVN…RFNMELLPTK (78 aa)) are alpha C-terminal domain (alpha-CTD).

Belongs to the RNA polymerase alpha chain family. In terms of assembly, in plastids the minimal PEP RNA polymerase catalytic core is composed of four subunits: alpha, beta, beta', and beta''. When a (nuclear-encoded) sigma factor is associated with the core the holoenzyme is formed, which can initiate transcription.

The protein resides in the plastid. It localises to the chloroplast. It catalyses the reaction RNA(n) + a ribonucleoside 5'-triphosphate = RNA(n+1) + diphosphate. Its function is as follows. DNA-dependent RNA polymerase catalyzes the transcription of DNA into RNA using the four ribonucleoside triphosphates as substrates. This Staurastrum punctulatum (Green alga) protein is DNA-directed RNA polymerase subunit alpha.